Consider the following 194-residue polypeptide: Adenylate kinase (194 aa).

ATP is bound at residue 10-15; it reads GAGKGT. Residues 30–59 form an NMP region; that stretch reads STGDMLRAAVAQQSEIGKRAKAVMDAGQLV. AMP-binding positions include T31, R36, 57 to 59, 85 to 88, and Q92; these read QLV and GYPR. An LID region spans residues 126–142; that stretch reads SRVAETIAKGGQVRSDD. R127 is an ATP binding site. Residues R139 and R150 each coordinate AMP. Residue A178 coordinates ATP.

The protein belongs to the adenylate kinase family. As to quaternary structure, monomer.

It localises to the cytoplasm. The enzyme catalyses AMP + ATP = 2 ADP. The protein operates within purine metabolism; AMP biosynthesis via salvage pathway; AMP from ADP: step 1/1. In terms of biological role, catalyzes the reversible transfer of the terminal phosphate group between ATP and AMP. Plays an important role in cellular energy homeostasis and in adenine nucleotide metabolism. The polypeptide is Adenylate kinase (Brucella canis (strain ATCC 23365 / NCTC 10854 / RM-666)).